Here is a 412-residue protein sequence, read N- to C-terminus: Serine/threonine transporter SstT (412 aa).

The next 10 membrane-spanning stretches (helical) occupy residues 16-36, 44-64, 82-102, 115-135, 141-161, 179-199, 217-237, 298-318, 330-350, and 357-377; these read LVAQIVVGLLAGALLALFLPG, LGDLFVQALKAVAPVLVFVLV, IIVLYALGTLSAAAVAVLASF, TDVIPPAGVGAVLNTLLFNIV, ALLNGNFIGILAWAIGLGFAF, VTLIVKVVIRFAPLGVFGLVA, LLVLVGAMLFMALVMNPLIVF, MGGAAITITVLTLAAVNTLGI, LLAAVCACGASGVAGGSLLLI, and FGISNDLAMQVVAVGFIIGVV.

The protein belongs to the dicarboxylate/amino acid:cation symporter (DAACS) (TC 2.A.23) family.

It localises to the cell inner membrane. It carries out the reaction L-serine(in) + Na(+)(in) = L-serine(out) + Na(+)(out). The catalysed reaction is L-threonine(in) + Na(+)(in) = L-threonine(out) + Na(+)(out). Its function is as follows. Involved in the import of serine and threonine into the cell, with the concomitant import of sodium (symport system). In Stutzerimonas stutzeri (strain A1501) (Pseudomonas stutzeri), this protein is Serine/threonine transporter SstT.